The sequence spans 548 residues: Probable zinc metalloprotease EGY1, chloroplastic (548 aa).

A chloroplast-targeting transit peptide spans 1-18; that stretch reads MGTLTSVAFAAAVNIRFR. A compositionally biased stretch (basic and acidic residues) spans 61–76; sequence NSNRDDSIGENGETHK. The disordered stretch occupies residues 61-116; the sequence is NSNRDDSIGENGETHKSSVVKTATFEEEDEETSKSSSTTSSSNEFGSDKTSMPSTI. Residues 103–116 are compositionally biased toward polar residues; it reads NEFGSDKTSMPSTI. The next 8 helical transmembrane spans lie at 242 to 262, 290 to 310, 326 to 346, 361 to 381, 388 to 408, 416 to 436, 474 to 494, and 516 to 536; these read YVIA…LGIA, LYPF…ILLF, LSIP…ITQF, LAGP…GLFL, ANDL…LGLI, AALH…WCGL, MLGL…YVLI, and ALVG…WDEL.

This sequence belongs to the peptidase M50B family. As to expression, expressed in roots, leaves, cotyledons, hypocotyls, stems, flowers and siliques.

The protein resides in the plastid. The protein localises to the chloroplast membrane. Membrane-associated and ATP-independent metalloprotease required for development of both thylakoid grana and well-organized lamellae in chloroplast. Required for the accumulation of chlorophyll and chlorophyll a/b binding (CAB) proteins (from both PS I and PS II) in chloroplast membranes, and for grana formation and normal chloroplast development. Involved in the regulation of nuclear gene expression in response to ammonium stress and interacts with ABA signaling. Carries out beta-casein degradation in an ATP-independent manner in vitro. In Arabidopsis thaliana (Mouse-ear cress), this protein is Probable zinc metalloprotease EGY1, chloroplastic (EGY1).